The sequence spans 304 residues: N-acetyl-D-glucosamine kinase (304 aa).

ATP is bound by residues 4–11 (GFDMGGTK) and 133–140 (GVGGGLIV). H157, C177, C179, and C184 together coordinate Zn(2+).

This sequence belongs to the ROK (NagC/XylR) family. NagK subfamily.

The catalysed reaction is N-acetyl-D-glucosamine + ATP = N-acetyl-D-glucosamine 6-phosphate + ADP + H(+). It functions in the pathway cell wall biogenesis; peptidoglycan recycling. In terms of biological role, catalyzes the phosphorylation of N-acetyl-D-glucosamine (GlcNAc) derived from cell-wall degradation, yielding GlcNAc-6-P. The polypeptide is N-acetyl-D-glucosamine kinase (Yersinia pseudotuberculosis serotype O:3 (strain YPIII)).